Reading from the N-terminus, the 658-residue chain is MENTLSALRSLMASHSPPLDALVVPSEDYHQSEYVSARDKRREFVSGFSGSAGLALITKDVALLWTDGRYFLQAEQQLSDEWKLMRIGEDPAVDTWMADNLLKEASIGVDPWCISIDTAQRWERSFAEKQQKLVQTTKNLVDEVWADRPPAEINAVVVQPLKFAGRSVADKLKDLRKKLVQEQARGIIFTSLDEVAWLYNIRGNDVAYCPVVHAFAIVTSNSAFLYVDKRKVSAEVKSHLEENGIEIREYTAVSFDVALLATDELDTTSTAKDTLAEITKQAEKFVSETNKSVNGKHQAKENSNNLIWADPGSCCYAVYSKLNPDTVLLQQSPLALAKALKNPVELEGLKQAHIRDGAAVVQYLVWLDKQMQDIFGASGYFSEGNTVKKEELSQSLKLTEVTVSDKLEGFRASKKHFRGLSFPTISSVGPNGAVIHYSPKAETCAELDPDKIYLFDSGAQYLDGTTDITRTVHFGKPSAHEKACYTAVLKGHIALGNAVFPNGTNGHALDILARIPLWKNGLDYRHGTGHGIGSYLNVHEGPHLISFKPRNVPLQSSMTVTDEPGYYEDGAFGIRLENVLIINEADTKFNFGDKGYLSFEHITWAPYQTKLIDLNLLTPDEINWLNSYHSRCRDILQPHLDDAAENEWLKKATEPVGV.

A peptide contacts are provided by arginine 69 and histidine 436. Mn(2+)-binding residues include aspartate 456, aspartate 467, and histidine 530. Positions 530, 539, and 563 each coordinate a peptide. Glutamate 563 and glutamate 577 together coordinate Mn(2+).

This sequence belongs to the peptidase M24B family. In terms of assembly, homodimer. Interacts with N-1-naphthylphthalamic acid (NPA). Interacts with NBCL/BOP2/COCH around the plasma membrane and in the nucleus; this interaction disturbs its regulation of the nuclear transcription factor Y subunit (NF-YA1). Mn(2+) serves as cofactor. The cofactor is Zn(2+). As to expression, expressed at similar levels in shoot apical meristems (SAM), root meristems (RM), root apical meristems (RAM), roots and leaves and, to a slightly lesser degree, in root nodules.

It localises to the nucleus. The protein resides in the cytoplasm. The protein localises to the cell membrane. Its subcellular location is the microsome membrane. The catalysed reaction is Release of any N-terminal amino acid, including proline, that is linked to proline, even from a dipeptide or tripeptide.. Functionally, catalyzes the removal of a penultimate prolyl residue from the N-termini of peptides, such as Arg-Pro-Pro. Aminopeptidase that binds to the auxin transport inhibitor N-1-naphthylphthalamic acid (NPA). May play a negative role in the regulation of PIN auxin transport proteins. Involved in the coordination of the symbiotic nodule developmental program; prevents the formation of root nodules by regulating the expression of the nuclear transcription factor Y subunit (NF-YA1), a key nodulin. The protein is Aminopeptidase P1 of Lotus japonicus (Lotus corniculatus var. japonicus).